The chain runs to 299 residues: Diaminopimelate epimerase (299 aa).

Asn15, Gln47, and Asn67 together coordinate substrate. Residue Cys76 is the Proton donor of the active site. Substrate contacts are provided by residues 77–78 (GN), Asn163, Asn197, and 215–216 (ER). Residue Cys224 is the Proton acceptor of the active site. A substrate-binding site is contributed by 225 to 226 (GS).

The protein belongs to the diaminopimelate epimerase family. Homodimer.

It is found in the cytoplasm. It catalyses the reaction (2S,6S)-2,6-diaminopimelate = meso-2,6-diaminopimelate. It functions in the pathway amino-acid biosynthesis; L-lysine biosynthesis via DAP pathway; DL-2,6-diaminopimelate from LL-2,6-diaminopimelate: step 1/1. Functionally, catalyzes the stereoinversion of LL-2,6-diaminopimelate (L,L-DAP) to meso-diaminopimelate (meso-DAP), a precursor of L-lysine and an essential component of the bacterial peptidoglycan. This chain is Diaminopimelate epimerase, found in Agrobacterium fabrum (strain C58 / ATCC 33970) (Agrobacterium tumefaciens (strain C58)).